The following is a 210-amino-acid chain: Imidazoleglycerol-phosphate dehydratase (210 aa).

It belongs to the imidazoleglycerol-phosphate dehydratase family.

The protein localises to the cytoplasm. The catalysed reaction is D-erythro-1-(imidazol-4-yl)glycerol 3-phosphate = 3-(imidazol-4-yl)-2-oxopropyl phosphate + H2O. It functions in the pathway amino-acid biosynthesis; L-histidine biosynthesis; L-histidine from 5-phospho-alpha-D-ribose 1-diphosphate: step 6/9. In Mycobacterium leprae (strain Br4923), this protein is Imidazoleglycerol-phosphate dehydratase.